The sequence spans 195 residues: Molybdenum cofactor guanylyltransferase (195 aa).

GTP is bound by residues 10–12, lysine 23, asparagine 51, aspartate 69, and aspartate 99; that span reads LAG. Residue aspartate 99 coordinates Mg(2+).

The protein belongs to the MobA family. As to quaternary structure, monomer. The cofactor is Mg(2+).

The protein localises to the cytoplasm. The catalysed reaction is Mo-molybdopterin + GTP + H(+) = Mo-molybdopterin guanine dinucleotide + diphosphate. Functionally, transfers a GMP moiety from GTP to Mo-molybdopterin (Mo-MPT) cofactor (Moco or molybdenum cofactor) to form Mo-molybdopterin guanine dinucleotide (Mo-MGD) cofactor. This chain is Molybdenum cofactor guanylyltransferase, found in Yersinia pseudotuberculosis serotype O:1b (strain IP 31758).